The following is a 524-amino-acid chain: Origin of replication complex subunit 5 (524 aa).

Residues 1–19 (MSQPVTPRRTTRSSASASP) show a composition bias toward low complexity. The disordered stretch occupies residues 1-56 (MSQPVTPRRTTRSSASASPSPAPASPTSPPKSRPKPSPRRQLLAAAAAPPKEDGSS). Over residues 20 to 31 (SPAPASPTSPPK) the composition is skewed to pro residues. Residues 39 to 49 (RRQLLAAAAAP) show a composition bias toward low complexity. Residue 90–97 (GGAATGKT) coordinates ATP.

It belongs to the ORC5 family. In terms of assembly, component of the origin recognition complex (ORC) composed of at least ORC1, ORC2, ORC3, ORC4, ORC5 and ORC6. ORC is regulated in a cell-cycle and development dependent manner. It is sequentially assembled at the exit from anaphase of mitosis and disassembled as cells enter S phase.

It localises to the nucleus. Component of the origin recognition complex (ORC) that binds origins of replication. DNA-binding is ATP-dependent. The specific DNA sequences that define origins of replication have not been identified yet. ORC is required to assemble the pre-replication complex necessary to initiate DNA replication. This is Origin of replication complex subunit 5 from Oryza sativa subsp. indica (Rice).